The chain runs to 280 residues: 2,3,4,5-tetrahydropyridine-2,6-dicarboxylate N-succinyltransferase (280 aa).

Residues R107 and D144 each contribute to the substrate site.

It belongs to the transferase hexapeptide repeat family. In terms of assembly, homotrimer.

The protein resides in the cytoplasm. The catalysed reaction is (S)-2,3,4,5-tetrahydrodipicolinate + succinyl-CoA + H2O = (S)-2-succinylamino-6-oxoheptanedioate + CoA. It participates in amino-acid biosynthesis; L-lysine biosynthesis via DAP pathway; LL-2,6-diaminopimelate from (S)-tetrahydrodipicolinate (succinylase route): step 1/3. This is 2,3,4,5-tetrahydropyridine-2,6-dicarboxylate N-succinyltransferase from Granulibacter bethesdensis (strain ATCC BAA-1260 / CGDNIH1).